Here is a 107-residue protein sequence, read N- to C-terminus: Large ribosomal subunit protein P1 (107 aa).

Positions 67–82 are enriched in low complexity; sequence GPASAAPAGAAGAAAP. The tract at residues 67–107 is disordered; it reads GPASAAPAGAAGAAAPAEEKAEEKEEEKEESDEDMGFGLFD. Residues 90 to 101 are compositionally biased toward acidic residues; the sequence is KEEEKEESDEDM.

Belongs to the eukaryotic ribosomal protein P1/P2 family. In terms of assembly, P1 and P2 exist as dimers at the large ribosomal subunit.

It is found in the cytoplasm. In terms of biological role, plays an important role in the elongation step of protein synthesis. This is Large ribosomal subunit protein P1 from Penicillium crustosum (Blue mold fungus).